Reading from the N-terminus, the 443-residue chain is MFPITIGLNHKTAPVEIREKVSFHPSEINKALMELNELSALNGIVLLSTCNRLEIYAATPEVELGVSVIKKFLARHGKLREEDINQYLYVHTLYDSVRHLFRVVAGLDSMVMGETQILGQVAEAYEKSSQLNLSNKIIHAIFQNALAVGKRVRSETQIDQHPTSVSYTAVELAKQTFGDVQGKSILILGAGEMSALTAKHLVASGADTVLVSNRSMQRAQALAEEFSGRAIPYEELDTALAEADIVISATAAAHFVIKPERMRRVMEQRRQRALLLIDIAVPRDIHPNVGELEGVTLFDIDDLRGVVDSHQKAREEAALQAGRILEEEMGRFVKWHNSLYVVPTIVALQRRGEEVREIMLKSALNKLGPIDEKQEKIIRSMANSIVTHLLHAPIANLKEAANTSQGHLYTEILQNLFDLDGNELSPHAGWSVHHAASHHSNQG.

Substrate is bound by residues 49–52 (TCNR), Ser109, 114–116 (ETQ), and Gln120. Cys50 acts as the Nucleophile in catalysis. Position 189-194 (189-194 (GAGEMS)) interacts with NADP(+).

This sequence belongs to the glutamyl-tRNA reductase family. As to quaternary structure, homodimer.

It catalyses the reaction (S)-4-amino-5-oxopentanoate + tRNA(Glu) + NADP(+) = L-glutamyl-tRNA(Glu) + NADPH + H(+). It participates in porphyrin-containing compound metabolism; protoporphyrin-IX biosynthesis; 5-aminolevulinate from L-glutamyl-tRNA(Glu): step 1/2. In terms of biological role, catalyzes the NADPH-dependent reduction of glutamyl-tRNA(Glu) to glutamate 1-semialdehyde (GSA). The sequence is that of Glutamyl-tRNA reductase from Desulfitobacterium hafniense (strain DSM 10664 / DCB-2).